Reading from the N-terminus, the 141-residue chain is Putative nickel-responsive regulator (141 aa).

Residues His80, His91, His93, and Cys99 each contribute to the Ni(2+) site.

It belongs to the transcriptional regulatory CopG/NikR family. Ni(2+) is required as a cofactor.

In terms of biological role, transcriptional regulator. The polypeptide is Putative nickel-responsive regulator (Methanococcus maripaludis (strain C5 / ATCC BAA-1333)).